Reading from the N-terminus, the 475-residue chain is UDP-N-acetylmuramate--L-alanine ligase (475 aa).

117 to 123 contacts ATP; the sequence is GTHGKTT.

Belongs to the MurCDEF family.

It is found in the cytoplasm. The catalysed reaction is UDP-N-acetyl-alpha-D-muramate + L-alanine + ATP = UDP-N-acetyl-alpha-D-muramoyl-L-alanine + ADP + phosphate + H(+). The protein operates within cell wall biogenesis; peptidoglycan biosynthesis. Its function is as follows. Cell wall formation. In Chlorobaculum tepidum (strain ATCC 49652 / DSM 12025 / NBRC 103806 / TLS) (Chlorobium tepidum), this protein is UDP-N-acetylmuramate--L-alanine ligase.